Reading from the N-terminus, the 242-residue chain is Pyridoxine 5'-phosphate synthase (242 aa).

Position 7 (Asn-7) interacts with 3-amino-2-oxopropyl phosphate. 9 to 10 (DH) is a binding site for 1-deoxy-D-xylulose 5-phosphate. A 3-amino-2-oxopropyl phosphate-binding site is contributed by Arg-18. Residue His-43 is the Proton acceptor of the active site. 1-deoxy-D-xylulose 5-phosphate contacts are provided by Arg-45 and His-50. Glu-70 (proton acceptor) is an active-site residue. Thr-100 serves as a coordination point for 1-deoxy-D-xylulose 5-phosphate. His-191 serves as the catalytic Proton donor. 3-amino-2-oxopropyl phosphate contacts are provided by residues Gly-192 and 213-214 (GH).

It belongs to the PNP synthase family. Homooctamer; tetramer of dimers.

Its subcellular location is the cytoplasm. The catalysed reaction is 3-amino-2-oxopropyl phosphate + 1-deoxy-D-xylulose 5-phosphate = pyridoxine 5'-phosphate + phosphate + 2 H2O + H(+). The protein operates within cofactor biosynthesis; pyridoxine 5'-phosphate biosynthesis; pyridoxine 5'-phosphate from D-erythrose 4-phosphate: step 5/5. Its function is as follows. Catalyzes the complicated ring closure reaction between the two acyclic compounds 1-deoxy-D-xylulose-5-phosphate (DXP) and 3-amino-2-oxopropyl phosphate (1-amino-acetone-3-phosphate or AAP) to form pyridoxine 5'-phosphate (PNP) and inorganic phosphate. The chain is Pyridoxine 5'-phosphate synthase from Chromobacterium violaceum (strain ATCC 12472 / DSM 30191 / JCM 1249 / CCUG 213 / NBRC 12614 / NCIMB 9131 / NCTC 9757 / MK).